Here is a 359-residue protein sequence, read N- to C-terminus: tRNA-specific 2-thiouridylase MnmA (359 aa).

ATP contacts are provided by residues 7 to 14 (AMSGGVDS) and methionine 33. Cysteine 101 serves as the catalytic Nucleophile. A disulfide bridge connects residues cysteine 101 and cysteine 198. ATP is bound at residue glycine 125. Residues 148-150 (KDQ) form an interaction with tRNA region. The active-site Cysteine persulfide intermediate is cysteine 198.

The protein belongs to the MnmA/TRMU family.

It localises to the cytoplasm. The catalysed reaction is S-sulfanyl-L-cysteinyl-[protein] + uridine(34) in tRNA + AH2 + ATP = 2-thiouridine(34) in tRNA + L-cysteinyl-[protein] + A + AMP + diphosphate + H(+). Its function is as follows. Catalyzes the 2-thiolation of uridine at the wobble position (U34) of tRNA, leading to the formation of s(2)U34. The polypeptide is tRNA-specific 2-thiouridylase MnmA (Chloroflexus aggregans (strain MD-66 / DSM 9485)).